The following is a 179-amino-acid chain: Large ribosomal subunit protein uL6 (179 aa).

It belongs to the universal ribosomal protein uL6 family. Part of the 50S ribosomal subunit.

This protein binds to the 23S rRNA, and is important in its secondary structure. It is located near the subunit interface in the base of the L7/L12 stalk, and near the tRNA binding site of the peptidyltransferase center. The sequence is that of Large ribosomal subunit protein uL6 from Mycobacterium sp. (strain KMS).